A 248-amino-acid polypeptide reads, in one-letter code: Small ribosomal subunit protein uS3 (248 aa).

The KH type-2 domain occupies 38–106; it reads IREFLSKGLD…QVALNILEVK (69 aa). The segment covering 214–230 has biased composition (basic and acidic residues); sequence SEINAPAERRGRGDRNA. The segment at 214-248 is disordered; that stretch reads SEINAPAERRGRGDRNARPRRGGQRRQRAEQKQEG.

Belongs to the universal ribosomal protein uS3 family. In terms of assembly, part of the 30S ribosomal subunit. Forms a tight complex with proteins S10 and S14.

Binds the lower part of the 30S subunit head. Binds mRNA in the 70S ribosome, positioning it for translation. The chain is Small ribosomal subunit protein uS3 from Corynebacterium glutamicum (strain R).